The primary structure comprises 217 residues: Adenylate kinase (217 aa).

10–15 (GAGKGT) provides a ligand contact to ATP. The interval 30-59 (STGDIFRAAMKNETPMGIEAKKYIDKGELV) is NMP. Residues Thr-31, Arg-36, 57–59 (ELV), 85–88 (GFPR), and Gln-92 each bind AMP. The tract at residues 126 to 164 (GRFICRNCGATYHKLYNAPKVEGTCDVCGHHEFYQRDDD) is LID. Arg-127 lines the ATP pocket. Zn(2+) is bound by residues Cys-130 and Cys-133. 136 to 137 (TY) is a binding site for ATP. Zn(2+) is bound by residues Cys-150 and Cys-153. Positions 161 and 172 each coordinate AMP. Gln-200 serves as a coordination point for ATP.

The protein belongs to the adenylate kinase family. Monomer.

The protein resides in the cytoplasm. The enzyme catalyses AMP + ATP = 2 ADP. Its pathway is purine metabolism; AMP biosynthesis via salvage pathway; AMP from ADP: step 1/1. Its function is as follows. Catalyzes the reversible transfer of the terminal phosphate group between ATP and AMP. Plays an important role in cellular energy homeostasis and in adenine nucleotide metabolism. The polypeptide is Adenylate kinase (Limosilactobacillus reuteri subsp. reuteri (strain JCM 1112) (Lactobacillus reuteri)).